The sequence spans 309 residues: Olfactory receptor 1A1 (309 aa).

Residues 1-25 (MRENNQSSTLEFILLGVTGQQEQED) lie on the Extracellular side of the membrane. Residue asparagine 5 is glycosylated (N-linked (GlcNAc...) asparagine). Residues 26 to 49 (FFYILFLFIYPITLIGNLLIVLAI) form a helical membrane-spanning segment. Residues 50-57 (CSDVRLHN) are Cytoplasmic-facing. A helical membrane pass occupies residues 58–79 (PMYFLLANLSLVDIFFSSVTIP). Residues 80 to 100 (KMLANHLLGSKSISFGGCLTQ) lie on the Extracellular side of the membrane. Residues cysteine 97 and cysteine 189 are joined by a disulfide bond. Residues 101–120 (MYFMIALGNTDSYILAAMAY) form a helical membrane-spanning segment. The Cytoplasmic segment spans residues 121-139 (DRAVAISRPLHYTTIMSPR). The helical transmembrane segment at 140 to 158 (SCIWLIAGSWVIGNANALP) threads the bilayer. At 159 to 195 (HTLLTASLSFCGNQEVANFYCDITPLLKLSCSDIHFH) the chain is on the extracellular side. Residues 196–218 (VKMMYLGVGIFSVPLLCIIVSYI) traverse the membrane as a helical segment. Residues 219–235 (RVFSTVFQVPSTKGVLK) lie on the Cytoplasmic side of the membrane. A helical membrane pass occupies residues 236 to 258 (AFSTCGSHLTVVSLYYGTVMGTY). Residues 259–270 (FRPLTNYSLKDA) lie on the Extracellular side of the membrane. Residue asparagine 264 is glycosylated (N-linked (GlcNAc...) asparagine). A helical transmembrane segment spans residues 271-290 (VITVMYTAVTPMLNPFIYSL). Over 291–309 (RNRDMKAALRKLFNKRISS) the chain is Cytoplasmic.

This sequence belongs to the G-protein coupled receptor 1 family.

The protein localises to the cell membrane. Its function is as follows. Odorant receptor. The chain is Olfactory receptor 1A1 (OR1A1) from Homo sapiens (Human).